The sequence spans 247 residues: Acidic 27 kDa endochitinase (247 aa).

The first 16 residues, 1 to 16, serve as a signal peptide directing secretion; the sequence is MVLCCVFLLFLTGSFA. The Proton donor role is filled by Glu-84. Residues Cys-206 and Cys-238 are joined by a disulfide bond.

It belongs to the glycosyl hydrolase 19 family. Chitinase class II subfamily.

The protein localises to the secreted. Its subcellular location is the extracellular space. It carries out the reaction Random endo-hydrolysis of N-acetyl-beta-D-glucosaminide (1-&gt;4)-beta-linkages in chitin and chitodextrins.. Its function is as follows. Defense against chitin-containing fungal pathogens. The protein is Acidic 27 kDa endochitinase (CHI17) of Solanum lycopersicum (Tomato).